A 323-amino-acid chain; its full sequence is tRNA dimethylallyltransferase (323 aa).

Residue 12 to 19 coordinates ATP; that stretch reads GPTAAGKT. 14–19 contributes to the substrate binding site; the sequence is TAAGKT. Interaction with substrate tRNA regions lie at residues 37–40 and 161–165; these read DSAL and QRLSR.

It belongs to the IPP transferase family. Monomer. It depends on Mg(2+) as a cofactor.

It carries out the reaction adenosine(37) in tRNA + dimethylallyl diphosphate = N(6)-dimethylallyladenosine(37) in tRNA + diphosphate. Functionally, catalyzes the transfer of a dimethylallyl group onto the adenine at position 37 in tRNAs that read codons beginning with uridine, leading to the formation of N6-(dimethylallyl)adenosine (i(6)A). The protein is tRNA dimethylallyltransferase of Pseudomonas fluorescens (strain SBW25).